Consider the following 215-residue polypeptide: MDVEIYQEDGVESGETAALDPTVFDIEPNDHIIWLDVKRIQAHQRQGTSKTKERGEVRGSGRKLYRQKGTGNARVGDAQSPIRRGGGRAHGARPRDYAHDLNQKEKRLARRSALSYKAANDNIQVIENFSLDRPDTRGLTDLFELLGVEGQDILLATAEVEREVYLSSQNLPDVNVQEVQSINTVDILDADVVLLQEGALDWLTDVLSTDEAVPA.

The segment at 43 to 101 (HQRQGTSKTKERGEVRGSGRKLYRQKGTGNARVGDAQSPIRRGGGRAHGARPRDYAHDL) is disordered. The span at 50–59 (KTKERGEVRG) shows a compositional bias: basic and acidic residues.

It belongs to the universal ribosomal protein uL4 family. Part of the 50S ribosomal subunit.

One of the primary rRNA binding proteins, this protein initially binds near the 5'-end of the 23S rRNA. It is important during the early stages of 50S assembly. It makes multiple contacts with different domains of the 23S rRNA in the assembled 50S subunit and ribosome. In terms of biological role, forms part of the polypeptide exit tunnel. The protein is Large ribosomal subunit protein uL4 of Salinibacter ruber (strain DSM 13855 / M31).